The chain runs to 167 residues: Ubiquitin-fold modifier-conjugating enzyme 1 (167 aa).

The active-site Glycyl thioester intermediate is the cysteine 116.

This sequence belongs to the ubiquitin-conjugating enzyme family. UFC1 subfamily.

E2-like enzyme which forms an intermediate with UFM1 via a thioester linkage. The protein is Ubiquitin-fold modifier-conjugating enzyme 1 of Anopheles gambiae (African malaria mosquito).